The primary structure comprises 131 residues: UPF0344 protein Sca_0577 (131 aa).

4 consecutive transmembrane segments (helical) span residues 1-21 (MLHL…VSYI), 42-62 (LFLV…FATA), 69-89 (LLTL…VTLV), and 99-119 (GLFW…IILP).

This sequence belongs to the UPF0344 family.

It is found in the cell membrane. This is UPF0344 protein Sca_0577 from Staphylococcus carnosus (strain TM300).